Here is a 194-residue protein sequence, read N- to C-terminus: Peptidyl-tRNA hydrolase (194 aa).

Tyr17 contributes to the tRNA binding site. His22 functions as the Proton acceptor in the catalytic mechanism. 3 residues coordinate tRNA: Phe69, Asn71, and Asn117.

Belongs to the PTH family. Monomer.

It localises to the cytoplasm. The enzyme catalyses an N-acyl-L-alpha-aminoacyl-tRNA + H2O = an N-acyl-L-amino acid + a tRNA + H(+). Functionally, hydrolyzes ribosome-free peptidyl-tRNAs (with 1 or more amino acids incorporated), which drop off the ribosome during protein synthesis, or as a result of ribosome stalling. Its function is as follows. Catalyzes the release of premature peptidyl moieties from peptidyl-tRNA molecules trapped in stalled 50S ribosomal subunits, and thus maintains levels of free tRNAs and 50S ribosomes. The polypeptide is Peptidyl-tRNA hydrolase (Renibacterium salmoninarum (strain ATCC 33209 / DSM 20767 / JCM 11484 / NBRC 15589 / NCIMB 2235)).